The following is a 256-amino-acid chain: C-8 sterol isomerase (256 aa).

Positions 1–31 are disordered; it reads MPPKKQSSSGGNKPSGSGSSSGRSSSGSSCR. Over residues 7 to 30 the composition is skewed to low complexity; that stretch reads SSSGGNKPSGSGSSSGRSSSGSSC. A helical membrane pass occupies residues 40–60; it reads IGGWLKFFAILFALVAPIAYV.

The protein belongs to the ERG2 family.

It is found in the endoplasmic reticulum membrane. It participates in steroid metabolism; ergosterol biosynthesis; ergosterol from zymosterol: step 2/5. Catalyzes the reaction which results in unsaturation at C-7 in the B ring of sterols. The sequence is that of C-8 sterol isomerase (erg-1) from Neurospora crassa (strain ATCC 24698 / 74-OR23-1A / CBS 708.71 / DSM 1257 / FGSC 987).